The chain runs to 518 residues: U-box domain-containing protein 57 (518 aa).

Residues glutamate 86–histidine 142 adopt a coiled-coil conformation. The 251-residue stretch at phenylalanine 159–isoleucine 409 folds into the Protein kinase domain. In terms of domain architecture, U-box spans serine 434–asparagine 508.

It carries out the reaction S-ubiquitinyl-[E2 ubiquitin-conjugating enzyme]-L-cysteine + [acceptor protein]-L-lysine = [E2 ubiquitin-conjugating enzyme]-L-cysteine + N(6)-ubiquitinyl-[acceptor protein]-L-lysine.. It functions in the pathway protein modification; protein ubiquitination. Its function is as follows. Possesses E3 ubiquitin-protein ligase in vitro. May be involved in cell death signaling. The sequence is that of U-box domain-containing protein 57 (PUB57) from Oryza sativa subsp. japonica (Rice).